A 216-amino-acid polypeptide reads, in one-letter code: 3-keto-L-gulonate-6-phosphate decarboxylase UlaD (216 aa).

Substrate is bound at residue D11. Residues E33 and D62 each contribute to the Mg(2+) site. R192 serves as a coordination point for substrate.

It belongs to the HPS/KGPDC family. KGPDC subfamily. Homodimer. Mg(2+) serves as cofactor.

The enzyme catalyses 3-dehydro-L-gulonate 6-phosphate + H(+) = L-xylulose 5-phosphate + CO2. It functions in the pathway cofactor degradation; L-ascorbate degradation; D-xylulose 5-phosphate from L-ascorbate: step 2/4. Its function is as follows. Catalyzes the decarboxylation of 3-keto-L-gulonate-6-P into L-xylulose-5-P. Is involved in the anaerobic L-ascorbate utilization. This is 3-keto-L-gulonate-6-phosphate decarboxylase UlaD from Escherichia coli O17:K52:H18 (strain UMN026 / ExPEC).